We begin with the raw amino-acid sequence, 205 residues long: Guanylate kinase (205 aa).

The Guanylate kinase-like domain occupies 17–195; that stretch reads PRLTVLSGPS…VSRELLALML (179 aa). 24–31 lines the ATP pocket; sequence GPSGVGKS.

The protein belongs to the guanylate kinase family.

The protein resides in the cytoplasm. It catalyses the reaction GMP + ATP = GDP + ADP. Its function is as follows. Essential for recycling GMP and indirectly, cGMP. This chain is Guanylate kinase, found in Streptomyces kasugaensis.